The primary structure comprises 955 residues: MPSLSVVPLMPPWLRWLCGLVLAIALGVGLCRLIAESLWFHQLGYLEVVWQRWSVQALLFLAVAGVSQLFYGCQQQWLLRQRTVTLDPALRAQSTYRGLGLWQLLLCAGSLNWLLIVATYHIGAIALQLWQQRSEMTFNSPLLPQLSVWRVAELSLQMVQTPWLLGLSLVAVILGLWLPVGLFQGLGILLSLAMGAIASLSWPVVLKGLFAASDPHTEPLFRHSISFYLFQIPLWELLRLWLVNLSVVGLGGTTLGYLLANESLSHGKFLGFVRSQRRHLQGLSAFVFATVALSFWLERYKLLYSTKGAAFGAGYTDVTVRLPLYGWLSASAFGVACLLAWSAIRRGGEQRRLGPIAPGLFGFTLGYLGVILIVDWLLPTAIEAAIVQPNQLQRELPYIQRTITHTREGFNLEKMRVEPFQPENNLNAEILAANAATTRNIRLWDTRPLLETNRQLQQLRSYYRFPAAFLDRYSLKLAPDQDQSEIRQVLIAAREVDYSAVQQFARSWINEHLVFTHGYGFTMSPVNTAEANGLPKYFVRDIGDTGQLLVNPPQIRESISFFYPRIYYGELTNTYIFVPSEVPELDFPRGTENVYNHYDGTGGVPIASWWRRLVYSVYFRDWQLLLTPNLRPDSRVLFRRLIQDRVRAIAPFLRFDSEPYLVVADPRSEQEIAPRPSTAGVNYLYWMIDAYTVSRYYPYSDPGEHSFNYIRNSVKVVVDAYNGDVTFYVVEPEDVMIRTWQRIFPTLFHPLSAMPHQLYRHIRYPIDLLQVQSEQLLKYHMSDPVVFYNREDLWQIPKEIYREKPQAVAPYYLITKLPIGATEEFILLVPFTPVNRPNLIGWLAARSDGENYGKLLLYVFPKQELVFGPEQMEARINQDPVISQQISLWNRQGSRSVQGNLLIIPIQRSLLYVEPIYLEADQNRLPTLARVIVMDNQRIVMAPTLEEALKQLFPQ.

The next 9 helical transmembrane spans lie at 6–26, 53–73, 98–118, 163–183, 186–206, 240–260, 280–300, 324–344, and 354–374; these read VVPL…AIAL, WSVQ…FYGC, GLGL…LIVA, WLLG…VGLF, LGIL…PVVL, LWLV…YLLA, LQGL…LERY, LYGW…WSAI, and GPIA…ILIV.

The protein belongs to the UPF0182 family.

It is found in the cell membrane. The protein is UPF0182 protein tll1193 of Thermosynechococcus vestitus (strain NIES-2133 / IAM M-273 / BP-1).